Reading from the N-terminus, the 86-residue chain is UPF0335 protein BR1752/BS1330_I1746 (86 aa).

This sequence belongs to the UPF0335 family.

The chain is UPF0335 protein BR1752/BS1330_I1746 from Brucella suis biovar 1 (strain 1330).